A 252-amino-acid chain; its full sequence is uncharacterized protein (252 aa).

This is an uncharacterized protein from Saccharolobus islandicus (Sulfolobus islandicus).